The chain runs to 76 residues: Sec-independent protein translocase protein TatA (76 aa).

Residues 1–21 (MGGISIWQLLIIALIVVLLFG) form a helical membrane-spanning segment. The tract at residues 43–76 (MSSEDEKKAIEDTSAEKTAQTEEKKTESKDKEQA) is disordered. Basic and acidic residues predominate over residues 46 to 76 (EDEKKAIEDTSAEKTAQTEEKKTESKDKEQA).

Belongs to the TatA/E family. In terms of assembly, the Tat system comprises two distinct complexes: a TatABC complex, containing multiple copies of TatA, TatB and TatC subunits, and a separate TatA complex, containing only TatA subunits. Substrates initially bind to the TatABC complex, which probably triggers association of the separate TatA complex to form the active translocon.

It localises to the cell inner membrane. In terms of biological role, part of the twin-arginine translocation (Tat) system that transports large folded proteins containing a characteristic twin-arginine motif in their signal peptide across membranes. TatA could form the protein-conducting channel of the Tat system. The chain is Sec-independent protein translocase protein TatA from Shewanella loihica (strain ATCC BAA-1088 / PV-4).